Consider the following 202-residue polypeptide: Small ribosomal subunit protein uS4c (202 aa).

The 64-residue stretch at 90 to 153 folds into the S4 RNA-binding domain; sequence MRLDNVIFRL…KSEAIISKNI (64 aa).

It belongs to the universal ribosomal protein uS4 family. As to quaternary structure, part of the 30S ribosomal subunit. Contacts protein S5. The interaction surface between S4 and S5 is involved in control of translational fidelity.

Its subcellular location is the plastid. The protein localises to the chloroplast. One of the primary rRNA binding proteins, it binds directly to 16S rRNA where it nucleates assembly of the body of the 30S subunit. In terms of biological role, with S5 and S12 plays an important role in translational accuracy. The chain is Small ribosomal subunit protein uS4c (rps4) from Hypopterygium didictyon.